Consider the following 522-residue polypeptide: Protein nucleotidyltransferase YdiU (522 aa).

Positions 109, 111, 112, 132, 144, 145, 195, and 202 each coordinate ATP. Residue Asp-271 is the Proton acceptor of the active site. Residues Asn-272 and Asp-281 each coordinate Mg(2+). ATP is bound at residue Asp-281.

Belongs to the SELO family. It depends on Mg(2+) as a cofactor. Mn(2+) is required as a cofactor.

It carries out the reaction L-seryl-[protein] + ATP = 3-O-(5'-adenylyl)-L-seryl-[protein] + diphosphate. The enzyme catalyses L-threonyl-[protein] + ATP = 3-O-(5'-adenylyl)-L-threonyl-[protein] + diphosphate. The catalysed reaction is L-tyrosyl-[protein] + ATP = O-(5'-adenylyl)-L-tyrosyl-[protein] + diphosphate. It catalyses the reaction L-histidyl-[protein] + UTP = N(tele)-(5'-uridylyl)-L-histidyl-[protein] + diphosphate. It carries out the reaction L-seryl-[protein] + UTP = O-(5'-uridylyl)-L-seryl-[protein] + diphosphate. The enzyme catalyses L-tyrosyl-[protein] + UTP = O-(5'-uridylyl)-L-tyrosyl-[protein] + diphosphate. Functionally, nucleotidyltransferase involved in the post-translational modification of proteins. It can catalyze the addition of adenosine monophosphate (AMP) or uridine monophosphate (UMP) to a protein, resulting in modifications known as AMPylation and UMPylation. In Burkholderia cenocepacia (strain HI2424), this protein is Protein nucleotidyltransferase YdiU.